Here is a 50-residue protein sequence, read N- to C-terminus: Photosystem II reaction center protein M (50 aa).

A helical membrane pass occupies residues 7 to 27 (GFIISLLFVGIPTIFLVGLYI). The disordered stretch occupies residues 31 to 50 (DGEKSSFFSDSSKGKLGPKS).

It belongs to the PsbM family. As to quaternary structure, PSII is composed of 1 copy each of membrane proteins PsbA, PsbB, PsbC, PsbD, PsbE, PsbF, PsbH, PsbI, PsbJ, PsbK, PsbL, PsbM, PsbT, PsbX, PsbY, Psb30/Ycf12, peripheral proteins PsbO, CyanoQ (PsbQ), PsbU, PsbV and a large number of cofactors. It forms dimeric complexes.

The protein resides in the cellular thylakoid membrane. Functionally, one of the components of the core complex of photosystem II (PSII). PSII is a light-driven water:plastoquinone oxidoreductase that uses light energy to abstract electrons from H(2)O, generating O(2) and a proton gradient subsequently used for ATP formation. It consists of a core antenna complex that captures photons, and an electron transfer chain that converts photonic excitation into a charge separation. This subunit is found at the monomer-monomer interface. In Prochlorococcus marinus (strain SARG / CCMP1375 / SS120), this protein is Photosystem II reaction center protein M.